The following is a 90-amino-acid chain: Small ribosomal subunit protein uS15c (90 aa).

This sequence belongs to the universal ribosomal protein uS15 family. In terms of assembly, part of the 30S ribosomal subunit.

It localises to the plastid. It is found in the chloroplast. This is Small ribosomal subunit protein uS15c (rps15) from Buxus microphylla (Littleleaf boxwood).